Here is a 292-residue protein sequence, read N- to C-terminus: Elongation factor Ts (292 aa).

The interval 79–82 (TDFV) is involved in Mg(2+) ion dislocation from EF-Tu.

Belongs to the EF-Ts family.

It localises to the cytoplasm. Functionally, associates with the EF-Tu.GDP complex and induces the exchange of GDP to GTP. It remains bound to the aminoacyl-tRNA.EF-Tu.GTP complex up to the GTP hydrolysis stage on the ribosome. This is Elongation factor Ts from Xanthomonas euvesicatoria pv. vesicatoria (strain 85-10) (Xanthomonas campestris pv. vesicatoria).